Consider the following 675-residue polypeptide: Anosmin-1 (675 aa).

Residues 1–21 form the signal peptide; the sequence is MVRRAPGASLALLLWVTAVSG. 5 disulfide bridges follow: Cys-43/Cys-77, Cys-47/Cys-71, Cys-80/Cys-99, Cys-84/Cys-95, and Cys-110/Cys-114. Asn-65 carries N-linked (GlcNAc...) asparagine glycosylation. In terms of domain architecture, WAP spans 121–170; that stretch reads LSVKQGDCPAPEKASGFAAACVESCEADSECSGVKKCCSNGCGHTCQVPK. 4 consecutive Fibronectin type-III domains span residues 180 to 281, 286 to 392, 418 to 515, and 545 to 652; these read PRKE…SKDP, APSN…TAQD, RRKP…FFVT, and KPEN…DLPP. 2 N-linked (GlcNAc...) asparagine glycosylation sites follow: Asn-203 and Asn-294. Polar residues predominate over residues 388-402; sequence STAQDNRNNNEQTSA. Residues 388–413 are disordered; that stretch reads STAQDNRNNNEQTSAGKPPKGLVDPY. Asn-465, Asn-548, and Asn-559 each carry an N-linked (GlcNAc...) asparagine glycan. Residues 654–675 are disordered; the sequence is LPHRPHLKQHHPHHYKPPPEKY. Basic residues predominate over residues 656–669; the sequence is HRPHLKQHHPHHYK.

As to expression, mainly expressed in neurons of the central nervous system during the second half of embryonic life. Expressed in mitral neurons of the olfactory bulbs, striatal neurons, Purkinje cells of the cerebellum, retinal neurons and neurons of the brainstem and spinal cord.

The protein resides in the cell surface. May be an adhesion-like molecule with anti-protease activity. This Gallus gallus (Chicken) protein is Anosmin-1.